Consider the following 196-residue polypeptide: Large ribosomal subunit protein eL15 (196 aa).

Residues 154–196 (PGHRGRSERGLTSAGVKGRGMRRRGKGTEKCRPSVRANANRAK) form a disordered region.

This sequence belongs to the eukaryotic ribosomal protein eL15 family.

The sequence is that of Large ribosomal subunit protein eL15 from Methanospirillum hungatei JF-1 (strain ATCC 27890 / DSM 864 / NBRC 100397 / JF-1).